The following is a 75-amino-acid chain: uncharacterized protein (75 aa).

The signal sequence occupies residues 1-18 (MRKYLSARSMCCSFFSCA).

This is an uncharacterized protein from Treponema pallidum (strain Nichols).